Reading from the N-terminus, the 478-residue chain is Lipoprotein lipase (478 aa).

The first 28 residues, 1-28, serve as a signal peptide directing secretion; the sequence is MESKALLLLALSVCLQSLTVSRGGLVAA. The interaction with GPIHBP1 stretch occupies residues 35 to 56; the sequence is KDFRDIESKFALRTPEDTAEDT. Cys-57 and Cys-70 are disulfide-bonded. N-linked (GlcNAc...) asparagine glycosylation occurs at Asn-73. Tyr-124 bears the 3'-nitrotyrosine mark. Ser-162 (nucleophile) is an active-site residue. Residue Asp-186 is the Charge relay system of the active site. Tyr-194 is subject to 3'-nitrotyrosine. Ala-197, Arg-200, Ser-202, and Asp-205 together coordinate Ca(2+). A disulfide bridge connects residues Cys-246 and Cys-269. Residues 246 to 269 form an essential for determining substrate specificity region; it reads CNIGEALRVIAERGLGDVDQLVKC. The Charge relay system role is filled by His-271. A glycan (N-linked (GlcNAc...) asparagine) is linked at Asn-287. 2 disulfides stabilise this stretch: Cys-294/Cys-313 and Cys-305/Cys-308. One can recognise a PLAT domain in the interval 344–467; sequence FHYQVKIHFS…KGKSPVIFVK (124 aa). Tyr-346 carries the 3'-nitrotyrosine modification. An N-linked (GlcNAc...) asparagine glycan is attached at Asn-389. Residues 420-424 form an important for interaction with lipoprotein particles region; it reads WSNWW. The segment at 433–437 is important for heparin binding; the sequence is KIRVK. The segment at 446–470 is interaction with GPIHBP1; it reads IFCSREKMSYLQKGKSPVIFVKCHD. Cysteines 448 and 468 form a disulfide.

The protein belongs to the AB hydrolase superfamily. Lipase family. Homodimer. Interacts with GPIHBP1 with 1:1 stoichiometry. Interacts with APOC2; the interaction activates LPL activity in the presence of lipids. Interaction with heparan sulfate proteoglycans is required to protect LPL against loss of activity. Associates with lipoprotein particles in blood plasma. Interacts with LMF1 and SEL1L; interaction with SEL1L is required to prevent aggregation of newly synthesized LPL in the endoplasmic reticulum (ER), and for normal export of LPL from the ER to the extracellular space. Interacts with SORL1; SORL1 acts as a sorting receptor, promoting LPL localization to endosomes and later to lysosomes, leading to degradation of newly synthesized LPL. Tyrosine nitration after lipopolysaccharide (LPS) challenge down-regulates the lipase activity. Detected in milk (at protein level).

Its subcellular location is the cell membrane. The protein resides in the secreted. It is found in the extracellular space. It localises to the extracellular matrix. It catalyses the reaction a triacylglycerol + H2O = a diacylglycerol + a fatty acid + H(+). The catalysed reaction is a 1,2-diacyl-sn-glycero-3-phosphocholine + H2O = a 2-acyl-sn-glycero-3-phosphocholine + a fatty acid + H(+). The enzyme catalyses 1,2,3-tri-(9Z-octadecenoyl)-glycerol + H2O = di-(9Z)-octadecenoylglycerol + (9Z)-octadecenoate + H(+). It carries out the reaction 1,2-di-(9Z-octadecenoyl)-sn-glycero-3-phosphocholine + H2O = (9Z-octadecenoyl)-sn-glycero-3-phosphocholine + (9Z)-octadecenoate + H(+). It catalyses the reaction 1,2,3-tributanoylglycerol + H2O = dibutanoylglycerol + butanoate + H(+). The catalysed reaction is 1,2-dihexadecanoyl-sn-glycero-3-phosphocholine + H2O = hexadecanoyl-sn-glycero-3-phosphocholine + hexadecanoate + H(+). Its activity is regulated as follows. The apolipoprotein APOC2 acts as a coactivator of LPL activity. Ca(2+) binding promotes protein stability and formation of the active homodimer. Interaction with GPIHBP1 protects LPL against inactivation by ANGPTL4. Its function is as follows. Key enzyme in triglyceride metabolism. Catalyzes the hydrolysis of triglycerides from circulating chylomicrons and very low density lipoproteins (VLDL), and thereby plays an important role in lipid clearance from the blood stream, lipid utilization and storage. Although it has both phospholipase and triglyceride lipase activities it is primarily a triglyceride lipase with low but detectable phospholipase activity. Mediates margination of triglyceride-rich lipoprotein particles in capillaries. Recruited to its site of action on the luminal surface of vascular endothelium by binding to GPIHBP1 and cell surface heparan sulfate proteoglycans. This is Lipoprotein lipase (LPL) from Bos taurus (Bovine).